Here is a 381-residue protein sequence, read N- to C-terminus: 4-hydroxyphenylpyruvate dioxygenase (381 aa).

VOC domains lie at G22–R156 and A184–K338. Fe cation is bound by residues H187, H270, and E349.

The protein belongs to the 4HPPD family. In terms of assembly, homodimer. Requires Fe cation as cofactor.

It catalyses the reaction 3-(4-hydroxyphenyl)pyruvate + O2 = homogentisate + CO2. The protein operates within amino-acid degradation; L-phenylalanine degradation; acetoacetate and fumarate from L-phenylalanine: step 3/6. The protein is 4-hydroxyphenylpyruvate dioxygenase (hpd) of Streptomyces avermitilis (strain ATCC 31267 / DSM 46492 / JCM 5070 / NBRC 14893 / NCIMB 12804 / NRRL 8165 / MA-4680).